The chain runs to 835 residues: Neuroligin-2 (835 aa).

Residues 1-14 form the signal peptide; sequence MWLLALCLVGLAGA. Topologically, residues 15–677 are extracellular; that stretch reads QRGGGGPGGG…DSRDYSTELS (663 aa). 2 N-linked (GlcNAc...) asparagine glycosylation sites follow: Asn98 and Asn136. 3 disulfide bridges follow: Cys106/Cys141, Cys317/Cys328, and Cys487/Cys521. An N-linked (GlcNAc...) asparagine glycan is attached at Asn522. The segment at 623-668 is disordered; it reads PPYATRWPPRPPAGAPGTRRPPPPATLPPEPEPEPGPRAYDRFPGD. Pro residues predominate over residues 630–658; that stretch reads PPRPPAGAPGTRRPPPPATLPPEPEPEPG. A helical transmembrane segment spans residues 678–698; that stretch reads VTVAVGASLLFLNILAFAALY. Positions 678–698 are required for interaction with LHFPL4; that stretch reads VTVAVGASLLFLNILAFAALY. Residues 699-835 are Cytoplasmic-facing; sequence YKRDRRQELR…LPHPHSTTRV (137 aa). A phosphoserine mark is found at Ser713 and Ser718. The interval 790 to 835 is disordered; sequence LLPSGLGPPPPPPPPSLHPFGPFPPPPPTATSHNNTLPHPHSTTRV. Residues 795-818 show a composition bias toward pro residues; sequence LGPPPPPPPPSLHPFGPFPPPPPT. The segment covering 823–835 has biased composition (polar residues); that stretch reads NNTLPHPHSTTRV.

Belongs to the type-B carboxylesterase/lipase family. As to quaternary structure, interacts with neurexins NRXN1, NRXN2 and NRXN3. Interaction with neurexins is mediated by heparan sulfate glycan modification on neurexin. Interacts (via its C-terminus) with DLG4/PSD-95 (via PDZ domain 3). Interacts with PATJ. Interacts with GPHN. Interacts with MDGA1 and MDGA2. Found in a complex with MAGI2 and IGSF9B, where it interacts with MAGI2 (via WW 1, WW 2 and PDZ 2 domains). Identified in a complex of 720 kDa composed of LHFPL4, NLGN2, GABRA1, GABRB2, GABRG2 and GABRB3. Interacts with LHFPL4; leading to mutual regulation of the protein level and synaptic clustering. Interacts with NLGN2. In terms of tissue distribution, expressed in the blood vessel walls. Detected in colon, brain and pancreas islets of Langerhans (at protein level). Detected in brain, and at lower levels in pancreas islet beta cells.

Its subcellular location is the cell membrane. The protein localises to the postsynaptic cell membrane. It is found in the presynaptic cell membrane. Transmembrane scaffolding protein involved in cell-cell interactions via its interactions with neurexin family members. Mediates cell-cell interactions both in neurons and in other types of cells, such as Langerhans beta cells. Plays a role in synapse function and synaptic signal transmission, especially via gamma-aminobutyric acid receptors (GABA(A) receptors). Functions by recruiting and clustering synaptic proteins. Promotes clustering of postsynaptic GABRG2 and GPHN. Promotes clustering of postsynaptic LHFPL4. Modulates signaling by inhibitory synapses, and thereby plays a role in controlling the ratio of signaling by excitatory and inhibitory synapses and information processing. Required for normal signal amplitude from inhibitory synapses, but is not essential for normal signal frequency. May promote the initial formation of synapses, but is not essential for this. In vitro, triggers the de novo formation of presynaptic structures. Mediates cell-cell interactions between Langerhans beta cells and modulates insulin secretion. The polypeptide is Neuroligin-2 (NLGN2) (Homo sapiens (Human)).